Here is a 240-residue protein sequence, read N- to C-terminus: MWSSLFGWTSSNAKNKESPTKAIVRLREHINLLSKKQSHLRTQITNQENEARIFLTKGNKVMAKNALKKKKTIEQLLSKVEGTMESMEQQLFSIESANLNLETMRAMQEGAKAMKTIHSGLDIDKVDETMDEIREQVELGDEISDAISRPLITGANEVDEDELDEELDMLAQENANQETSKIVNNNVNAAPISENKVSLPSVPSNKIKQSENSVKDGEEEEDEEDEDEKALRELQAEMGL.

Thr72 is subject to Phosphothreonine. Phosphoserine is present on residues Ser119 and Ser193. Residues 193–240 are disordered; sequence SENKVSLPSVPSNKIKQSENSVKDGEEEEDEEDEDEKALRELQAEMGL. Polar residues predominate over residues 195 to 212; the sequence is NKVSLPSVPSNKIKQSEN. The segment covering 217–228 has biased composition (acidic residues); that stretch reads GEEEEDEEDEDE. Residue Lys229 forms a Glycyl lysine isopeptide (Lys-Gly) (interchain with G-Cter in ubiquitin) linkage. Basic and acidic residues predominate over residues 229–240; it reads KALRELQAEMGL.

It belongs to the SNF7 family. Core component of the ESCRT-III complex (endosomal sorting required for transport complex III). ESCRT-III appears to be sequentially assembled as a flat lattice on the endosome membrane and forms a transient 450 kDa complex that contains DID4, oligomerized SNF7, VPS20 and VPS24. SNF7 polymerizes into spirals at the surface of lipid bilayers. SNF7 polymerization is nucleated by association of SNF7 with VPS20; the process is terminated through association of VPS24, possibly by capping the SNF7 filament. Interacts with VTA1; the interaction requires DID2. Interacts with BRO1. Interacts with DOA4. Interacts with HEH1 and HEH2. Interacts with RIM20 and YGR122W.

Its subcellular location is the cytoplasm. It is found in the endosome membrane. The protein resides in the nucleus envelope. Functionally, acts a component of the ESCRT-III complex required for the sorting and concentration of proteins resulting in the entry of these proteins into the invaginating vesicles of the multivesicular body (MVB). The sequential action of ESCRT-0, -I, and -II together with the ordered assembly of ESCRT-III links membrane invagination to cargo sorting. Membrane scission in the neck of the growing vesicle releases mature, cargo-laden ILVs into the lumen. ESCRT-III is critical for late steps in MVB sorting, such as membrane invagination and final cargo sorting and recruitment of late-acting components of the sorting machinery. SNF7 is the most abundant ESCRT-III subunit which forms membrane-sculpting filaments with 30 Angstrom periodicity and a exposed cationic membrane-binding surface. Its activation requires a prominent conformational rearrangement to expose protein-membrane and protein-protein interfaces. SNF7 filaments then form spirals that could function as spiral springs. The elastic expansion of compressed SNF7 spirals generates an area difference between the two sides of the membrane and thus curvature which could be the origin of membrane deformation leading eventually to fission. SNF7 recruits BRO1, which in turn recruits DOA4, which deubiquitinates cargos before their enclosure within MVB vesicles. ESCRT-III is also recruited to the nuclear envelope (NE) by integral INM proteins to surveil and clear defective nuclear pore complex (NPC) assembly intermediates to ensure the fidelity of NPC assembly. This Saccharomyces cerevisiae (strain ATCC 204508 / S288c) (Baker's yeast) protein is Vacuolar-sorting protein SNF7.